Here is a 349-residue protein sequence, read N- to C-terminus: Pinopsin (349 aa).

Residues 1-16 show a composition bias toward polar residues; that stretch reads MDPTNSPQEPPHTSTP. The interval 1–22 is disordered; sequence MDPTNSPQEPPHTSTPGPFDGP. Residues 1–32 are Extracellular-facing; that stretch reads MDPTNSPQEPPHTSTPGPFDGPQWPHQAPRGM. Residues 33 to 57 traverse the membrane as a helical segment; it reads YLSVAVLMGIVVISASVVNGLVIVV. Residues 58 to 69 lie on the Cytoplasmic side of the membrane; sequence SIRYKKLRSPLN. Residues 70–94 form a helical membrane-spanning segment; sequence YILVNLAMADLLVTLCGSSVSFSNN. Residues 95–109 lie on the Extracellular side of the membrane; the sequence is INGFFVFGKRLCELE. C106 and C183 form a disulfide bridge. A helical transmembrane segment spans residues 110–129; it reads GFMVSLTGIVGLWSLAILAL. The Cytoplasmic portion of the chain corresponds to 130–148; the sequence is ERYVVVCRPLGDFRFQHRH. Residues 149-172 traverse the membrane as a helical segment; that stretch reads AVTGCAFTWVWSLLWTTPPLLGWS. The Extracellular segment spans residues 173 to 196; that stretch reads SYVPEGLRTSCGPNWYTGGSNNNS. The N-linked (GlcNAc...) asparagine glycan is linked to N194. A helical membrane pass occupies residues 197-224; that stretch reads YILTLFVTCFVMPLSLILFSYANLLMTL. The Cytoplasmic portion of the chain corresponds to 225-246; sequence RAAAAQQQESDTTQQAERQVTR. The chain crosses the membrane as a helical span at residues 247 to 270; the sequence is MVVAMVMAFLICWLPYTTFALVVA. Residues 271-278 are Extracellular-facing; that stretch reads TNKDIAIQ. A helical transmembrane segment spans residues 279-303; that stretch reads PALASLPSYFSKTATVYNPIIYVFM. An N6-(retinylidene)lysine modification is found at K290. Residues 304–349 lie on the Cytoplasmic side of the membrane; the sequence is NKQFQSCLLKMLCCGHHPRGTGRTAPAAPASPTDGLRNKVTPSHPV. S-palmitoyl cysteine attachment occurs at residues C316 and C317. The tract at residues 325–349 is disordered; that stretch reads GRTAPAAPASPTDGLRNKVTPSHPV.

Belongs to the G-protein coupled receptor 1 family. Opsin subfamily. In terms of processing, phosphorylated on some or all of the serine and threonine residues present in the C-terminal region. In terms of tissue distribution, pineal gland.

The protein localises to the membrane. Produces a slow and prolonged phototransduction response consistent with the non-visual function of pineal photoreception. The sequence is that of Pinopsin from Columba livia (Rock dove).